We begin with the raw amino-acid sequence, 319 residues long: Lipase 1 (319 aa).

The Nucleophile role is filled by S189. 2 residues coordinate Ca(2+): D314 and D317.

It catalyses the reaction a triacylglycerol + H2O = a diacylglycerol + a fatty acid + H(+). The protein is Lipase 1 (lip1) of Moraxella sp. (strain TA144).